The following is a 192-amino-acid chain: Protein hunchback (192 aa).

Disordered regions lie at residues 16 to 54 and 152 to 192; these read SHHH…SNTN and LTPP…KYMA. Over residues 17–28 the composition is skewed to basic residues; the sequence is HHHHHHHAHHSH. Residues 32-41 show a composition bias toward low complexity; the sequence is SNSNASSPHQ. Basic and acidic residues predominate over residues 173–192; sequence EPEKEHDLMSNSSEDMKYMA.

Belongs to the hunchback C2H2-type zinc-finger protein family.

Its subcellular location is the nucleus. In terms of biological role, gap class segmentation protein that controls development of head structures. This Drosophila tanythrix (Fruit fly) protein is Protein hunchback (hb).